The primary structure comprises 463 residues: Cysteine--tRNA ligase (463 aa).

Zn(2+) is bound at residue Cys27. The 'HIGH' region signature appears at 29–39 (PTVYGLIHIGN). Positions 207, 232, and 236 each coordinate Zn(2+). Residues 264-268 (KMSKS) carry the 'KMSKS' region motif. Position 267 (Lys267) interacts with ATP.

It belongs to the class-I aminoacyl-tRNA synthetase family. In terms of assembly, monomer. Requires Zn(2+) as cofactor.

It is found in the cytoplasm. It catalyses the reaction tRNA(Cys) + L-cysteine + ATP = L-cysteinyl-tRNA(Cys) + AMP + diphosphate. The chain is Cysteine--tRNA ligase from Pseudothermotoga lettingae (strain ATCC BAA-301 / DSM 14385 / NBRC 107922 / TMO) (Thermotoga lettingae).